We begin with the raw amino-acid sequence, 535 residues long: Probable deoxycholate-binding periplasmic protein YgiS (535 aa).

The N-terminal stretch at 1–20 (MYTRNLLWLVSLVSAAPLYA) is a signal peptide.

This sequence belongs to the bacterial solute-binding protein 5 family.

It is found in the periplasm. In terms of biological role, probably part of a deoxycholate transport system. Its expression in the presence of deoxycholate in a ygiS deletion mutant increases intracellular deoxycholate levels and decreases cell growth; higher expression in the presence of deoxycholate inhibits cell growth completely. Bile acid detergents such as deoxycholate are important for host defense against bacterial growth in the gall bladder and duodenum. The sequence is that of Probable deoxycholate-binding periplasmic protein YgiS (ygiS) from Escherichia coli (strain K12).